Here is a 301-residue protein sequence, read N- to C-terminus: Ribonuclease Z (301 aa).

His-61, His-63, Asp-65, His-66, His-140, Asp-211, and His-269 together coordinate Zn(2+). Residue Asp-65 is the Proton acceptor of the active site.

This sequence belongs to the RNase Z family. As to quaternary structure, homodimer. It depends on Zn(2+) as a cofactor.

The enzyme catalyses Endonucleolytic cleavage of RNA, removing extra 3' nucleotides from tRNA precursor, generating 3' termini of tRNAs. A 3'-hydroxy group is left at the tRNA terminus and a 5'-phosphoryl group is left at the trailer molecule.. Zinc phosphodiesterase, which displays some tRNA 3'-processing endonuclease activity. Probably involved in tRNA maturation, by removing a 3'-trailer from precursor tRNA. The sequence is that of Ribonuclease Z from Bradyrhizobium sp. (strain ORS 278).